Here is a 307-residue protein sequence, read N- to C-terminus: 2-haloacid dehalogenase, configuration-inverting (307 aa).

This sequence belongs to the HAD-like hydrolase superfamily. S-2-haloalkanoic acid dehalogenase family. As to quaternary structure, homodimer.

The catalysed reaction is an (S)-2-haloacid + H2O = a (2R)-2-hydroxycarboxylate + a halide anion + H(+). It catalyses the reaction an (R)-2-haloacid + H2O = a (2S)-2-hydroxycarboxylate + a halide anion + H(+). Functionally, dehalogenates both (S)- and (R)-2-haloalkanoic acids to the corresponding (R)- and (S)-hydroxyalkanoic acids, respectively, with inversion of configuration at C-2. Acts on 2-haloalkanoic acids whose carbon chain lengths are five or less. The polypeptide is 2-haloacid dehalogenase, configuration-inverting (Pseudomonas sp. (strain 113)).